A 249-amino-acid chain; its full sequence is NAD(P)H-quinone oxidoreductase subunit T, chloroplastic (249 aa).

The transit peptide at Met1–Ala45 directs the protein to the chloroplast. Positions Tyr44–Asp84 are disordered. One can recognise a J domain in the interval Ser106 to Leu172. A helical transmembrane segment spans residues Leu224–Phe244.

Part of the chloroplast NDH complex, composed of a mixture of chloroplast and nucleus encoded subunits. Component of the electron donor-binding subcomplex, at least composed of NDHS, NDHT and NDHU.

The protein resides in the plastid. It localises to the chloroplast thylakoid membrane. The enzyme catalyses a plastoquinone + NADH + (n+1) H(+)(in) = a plastoquinol + NAD(+) + n H(+)(out). It catalyses the reaction a plastoquinone + NADPH + (n+1) H(+)(in) = a plastoquinol + NADP(+) + n H(+)(out). In terms of biological role, NDH shuttles electrons from NAD(P)H:plastoquinone, via FMN and iron-sulfur (Fe-S) centers, to quinones in the photosynthetic chain and possibly in a chloroplast respiratory chain. The immediate electron acceptor for the enzyme in this species is believed to be plastoquinone. Couples the redox reaction to proton translocation, and thus conserves the redox energy in a proton gradient. Required for the accumulation of both the NDH subcomplex A and NDHS. In Arabidopsis thaliana (Mouse-ear cress), this protein is NAD(P)H-quinone oxidoreductase subunit T, chloroplastic.